A 528-amino-acid chain; its full sequence is Sensory rhodopsin I transducer (528 aa).

2 helical membrane-spanning segments follow: residues 11–31 (GAKL…VGVV) and 35–55 (VAST…INAA). HAMP domains lie at 55–107 (AETV…DRLS) and 142–195 (TAYQ…ETIE). Residues 214 to 455 (TSRRVQQEVD…ATADSIADVT (242 aa)) form the Methyl-accepting transducer domain. Glu259 is subject to Glutamate methyl ester (Glu).

It belongs to the methyl-accepting chemotaxis (MCP) protein family. In terms of assembly, interacts with Sop1.

It is found in the cell membrane. Transduces signals from the phototaxis receptor sensory rhodopsin I (Sop1). In Haloarcula marismortui (strain ATCC 43049 / DSM 3752 / JCM 8966 / VKM B-1809) (Halobacterium marismortui), this protein is Sensory rhodopsin I transducer (htr1).